Here is a 37-residue protein sequence, read N- to C-terminus: Large ribosomal subunit protein bL36 (37 aa).

The protein belongs to the bacterial ribosomal protein bL36 family.

This Beutenbergia cavernae (strain ATCC BAA-8 / DSM 12333 / CCUG 43141 / JCM 11478 / NBRC 16432 / NCIMB 13614 / HKI 0122) protein is Large ribosomal subunit protein bL36.